A 119-amino-acid polypeptide reads, in one-letter code: Ribonuclease P protein component (119 aa).

Residues M1–K20 are disordered.

It belongs to the RnpA family. Consists of a catalytic RNA component (M1 or rnpB) and a protein subunit.

It catalyses the reaction Endonucleolytic cleavage of RNA, removing 5'-extranucleotides from tRNA precursor.. Its function is as follows. RNaseP catalyzes the removal of the 5'-leader sequence from pre-tRNA to produce the mature 5'-terminus. It can also cleave other RNA substrates such as 4.5S RNA. The protein component plays an auxiliary but essential role in vivo by binding to the 5'-leader sequence and broadening the substrate specificity of the ribozyme. The polypeptide is Ribonuclease P protein component (Mycolicibacterium vanbaalenii (strain DSM 7251 / JCM 13017 / BCRC 16820 / KCTC 9966 / NRRL B-24157 / PYR-1) (Mycobacterium vanbaalenii)).